Here is a 210-residue protein sequence, read N- to C-terminus: Leucyl/phenylalanyl-tRNA--protein transferase (210 aa).

This sequence belongs to the L/F-transferase family.

It localises to the cytoplasm. It catalyses the reaction N-terminal L-lysyl-[protein] + L-leucyl-tRNA(Leu) = N-terminal L-leucyl-L-lysyl-[protein] + tRNA(Leu) + H(+). The enzyme catalyses N-terminal L-arginyl-[protein] + L-leucyl-tRNA(Leu) = N-terminal L-leucyl-L-arginyl-[protein] + tRNA(Leu) + H(+). The catalysed reaction is L-phenylalanyl-tRNA(Phe) + an N-terminal L-alpha-aminoacyl-[protein] = an N-terminal L-phenylalanyl-L-alpha-aminoacyl-[protein] + tRNA(Phe). Its function is as follows. Functions in the N-end rule pathway of protein degradation where it conjugates Leu, Phe and, less efficiently, Met from aminoacyl-tRNAs to the N-termini of proteins containing an N-terminal arginine or lysine. The sequence is that of Leucyl/phenylalanyl-tRNA--protein transferase from Roseobacter denitrificans (strain ATCC 33942 / OCh 114) (Erythrobacter sp. (strain OCh 114)).